A 961-amino-acid polypeptide reads, in one-letter code: Probable exosome complex exonuclease RRP44 (961 aa).

The 116-residue stretch at 73-188 (HALIVDSTSL…LVFDEDSKKR (116 aa)) folds into the PINc domain. Residues 232-338 (IFDEYLSHDR…DEENDDENDE (107 aa)) form the CSD1 domain. Positions 322-346 (ADDMGNEDEENDDENDEPKAKKSKK) are disordered. Residues 325 to 337 (MGNEDEENDDEND) are compositionally biased toward acidic residues. The region spanning 381-447 (LFCPAERLIP…ENEVLLLEHD (67 aa)) is the CSD2 domain. The region spanning 479–809 (RVDLRDLTIC…IVHRLLAAAI (331 aa)) is the RNB domain.

Belongs to the RNR ribonuclease family. Component of the RNA exosome complex. In terms of tissue distribution, ubiquitously expressed.

It localises to the nucleus. The protein resides in the nucleoplasm. Functionally, putative catalytic component of the RNA exosome complex which has 3'-&gt;5' exoribonuclease activity and participates in a multitude of cellular RNA processing and degradation events. Has both 3'-5' exonuclease and endonuclease activities. Involved in regulation of antisense ribosomal siRNA production. This is Probable exosome complex exonuclease RRP44 (dis-3) from Caenorhabditis elegans.